The chain runs to 350 residues: Erythronate-4-phosphate dehydrogenase (350 aa).

Substrate is bound by residues Ser-45 and Thr-66. Residues 124-125 (QV), Asp-144, 203-205 (ASR), and Asp-226 contribute to the NAD(+) site. The active site involves Arg-205. The active site involves Glu-231. Residue His-248 is the Proton donor of the active site. Gly-251 contributes to the NAD(+) binding site.

It belongs to the D-isomer specific 2-hydroxyacid dehydrogenase family. PdxB subfamily. Homodimer.

The protein resides in the cytoplasm. The enzyme catalyses 4-phospho-D-erythronate + NAD(+) = (R)-3-hydroxy-2-oxo-4-phosphooxybutanoate + NADH + H(+). It functions in the pathway cofactor biosynthesis; pyridoxine 5'-phosphate biosynthesis; pyridoxine 5'-phosphate from D-erythrose 4-phosphate: step 2/5. In terms of biological role, catalyzes the oxidation of erythronate-4-phosphate to 3-hydroxy-2-oxo-4-phosphonooxybutanoate. The chain is Erythronate-4-phosphate dehydrogenase from Legionella pneumophila subsp. pneumophila (strain Philadelphia 1 / ATCC 33152 / DSM 7513).